Here is a 230-residue protein sequence, read N- to C-terminus: Ribosomal RNA large subunit methyltransferase E (230 aa).

Residues Gly82, Trp84, Asp100, Asp116, and Asp140 each contribute to the S-adenosyl-L-methionine site. Lys180 serves as the catalytic Proton acceptor.

This sequence belongs to the class I-like SAM-binding methyltransferase superfamily. RNA methyltransferase RlmE family.

Its subcellular location is the cytoplasm. It catalyses the reaction uridine(2552) in 23S rRNA + S-adenosyl-L-methionine = 2'-O-methyluridine(2552) in 23S rRNA + S-adenosyl-L-homocysteine + H(+). Specifically methylates the uridine in position 2552 of 23S rRNA at the 2'-O position of the ribose in the fully assembled 50S ribosomal subunit. This Granulibacter bethesdensis (strain ATCC BAA-1260 / CGDNIH1) protein is Ribosomal RNA large subunit methyltransferase E.